The following is a 227-amino-acid chain: Large ribosomal subunit protein uL3 (227 aa).

This sequence belongs to the universal ribosomal protein uL3 family. In terms of assembly, part of the 50S ribosomal subunit. Forms a cluster with proteins L14 and L19.

One of the primary rRNA binding proteins, it binds directly near the 3'-end of the 23S rRNA, where it nucleates assembly of the 50S subunit. The chain is Large ribosomal subunit protein uL3 from Leuconostoc citreum (strain KM20).